The primary structure comprises 91 residues: MKKLFASLALAAFVAPVFAATQTVTLSVPGMTCASCPITVKHALSKVEGVSKTDVSFDKRQAVVTFDDAKTNVQKLTKATEDAGYPSSLKR.

The N-terminal stretch at 1–19 (MKKLFASLALAAFVAPVFA) is a signal peptide. In terms of domain architecture, HMA spans 22 to 88 (QTVTLSVPGM…ATEDAGYPSS (67 aa)). 2 residues coordinate Hg(2+): Cys-33 and Cys-36.

This sequence belongs to the MerP family. In terms of assembly, monomer.

Its subcellular location is the periplasm. In terms of biological role, involved in mercury resistance. Acts as a mercury scavenger that specifically binds to a mercuric ion in the periplasm and probably passes it to the cytoplasmic mercuric reductase MerA via the mercuric transport protein MerT. This Acinetobacter calcoaceticus protein is Mercuric transport protein periplasmic component.